We begin with the raw amino-acid sequence, 446 residues long: uncharacterized protein (446 aa).

The next 4 membrane-spanning stretches (helical) occupy residues 69–89 (FWLW…VTYL), 98–118 (FFLV…VWLA), 169–189 (HSLW…LLLV), and 247–267 (GLLV…AWVV).

It localises to the membrane. This is an uncharacterized protein from Neisseria meningitidis serogroup B (strain ATCC BAA-335 / MC58).